We begin with the raw amino-acid sequence, 385 residues long: Mannitol-1-phosphate 5-dehydrogenase (385 aa).

3–14 (ALQFGAGNIGRG) contacts NAD(+).

The protein belongs to the mannitol dehydrogenase family.

It carries out the reaction D-mannitol 1-phosphate + NAD(+) = beta-D-fructose 6-phosphate + NADH + H(+). The sequence is that of Mannitol-1-phosphate 5-dehydrogenase from Buchnera aphidicola subsp. Acyrthosiphon pisum (strain 5A).